Here is a 585-residue protein sequence, read N- to C-terminus: A-type ATP synthase subunit A (585 aa).

Position 231 to 238 (231 to 238) interacts with ATP; it reads GPFGSGKT.

Belongs to the ATPase alpha/beta chains family. In terms of assembly, has multiple subunits with at least A(3), B(3), C, D, E, F, H, I and proteolipid K(x).

It localises to the cell membrane. It catalyses the reaction ATP + H2O + 4 H(+)(in) = ADP + phosphate + 5 H(+)(out). Functionally, component of the A-type ATP synthase that produces ATP from ADP in the presence of a proton gradient across the membrane. The A chain is the catalytic subunit. This is A-type ATP synthase subunit A from Thermococcus sibiricus (strain DSM 12597 / MM 739).